The primary structure comprises 217 residues: Dense granule protein 1 (217 aa).

Residues 1–19 (MARQATFIVALCVCGLAIA) form the signal peptide. Over residues 171–183 (VASEDSALGNSEE) the composition is skewed to polar residues. Residues 171-217 (VASEDSALGNSEEQYVEGTVNGSSDPEQERAGGPLIPEGDEQEVDTE) form a disordered region. The N-linked (GlcNAc...) asparagine glycan is linked to Asn-191. A compositionally biased stretch (acidic residues) spans 208–217 (EGDEQEVDTE).

The protein belongs to the Gra7 family.

It is found in the secreted. In Neospora caninum (Coccidian parasite), this protein is Dense granule protein 1 (DG1).